Consider the following 216-residue polypeptide: Major fimbrial subunit (216 aa).

The signal sequence occupies residues 1 to 20 (MKKTLLGSLILLAFAGNVQA). A disulfide bond links Cys-41 and Cys-81.

The protein belongs to the fimbrial protein family.

It is found in the fimbrium. In terms of biological role, mediates adherence to oropharyngeal epithelial cells. Helps the airway colonization process. This Haemophilus influenzae protein is Major fimbrial subunit (hifA).